Here is a 494-residue protein sequence, read N- to C-terminus: Leucine-rich repeat extensin-like protein 4 (494 aa).

The signal sequence occupies residues 1 to 25 (MKNNTTQSLLLLLLFFFFFFEISHS). 3 N-linked (GlcNAc...) asparagine glycosylation sites follow: asparagine 60, asparagine 94, and asparagine 106. LRR repeat units lie at residues 121-145 (IRTVAGIDLNHADIAGYLPEELGLL), 146-168 (TDLALFHVNSNRFCGTVPHKFKQ), 169-193 (LKLLFELDLSNNRFAGKFPTVVLHL), 194-217 (PSLKFLDLRFNEFEGTVPKELFSK), 219-240 (LDAIFINHNRFRFELPENFGDS), 242-263 (VSVIVLANNHFHGCIPTSLVEM), 264-287 (KNLNEIIFMNNGLNSCLPADIGRL), 289-311 (NVTVFDVSFNELVGPLPESVGGM), and 312-335 (VEVEQLNVAHNLLSGKIPASICQL). Asparagine 289 carries N-linked (GlcNAc...) asparagine glycosylation. Asparagine 340 carries N-linked (GlcNAc...) asparagine glycosylation. The interval 404–494 (SPPIVALPPP…YASPPPPPFY (91 aa)) is contains the Ser-Pro(4) repeats. The segment covering 422–479 (PPVYSPPPSPPVFSPPPSPPVYSPPPPPSIHYSSPPPPPVHHSSPPPPSPEFEGPLPP) has biased composition (pro residues). The interval 422–482 (PPVYSPPPSP…FEGPLPPVIG (61 aa)) is disordered.

In terms of processing, hydroxylated on proline residues in the S-P-P-P-P repeat. O-glycosylated on hydroxyprolines. As to expression, expressed in roots, stems, leaves and flowers, mostly in vascular tissues.

Its subcellular location is the secreted. It localises to the cell wall. Modulates cell morphogenesis by regulating cell wall formation and assembly, and/or growth polarization. The polypeptide is Leucine-rich repeat extensin-like protein 4 (LRX4) (Arabidopsis thaliana (Mouse-ear cress)).